Reading from the N-terminus, the 301-residue chain is tRNA-cytidine(32) 2-sulfurtransferase (301 aa).

The PP-loop motif motif lies at 55 to 60 (SGGKDS). [4Fe-4S] cluster-binding residues include Cys130, Cys133, and Cys221.

This sequence belongs to the TtcA family. In terms of assembly, homodimer. Requires Mg(2+) as cofactor. The cofactor is [4Fe-4S] cluster.

Its subcellular location is the cytoplasm. It carries out the reaction cytidine(32) in tRNA + S-sulfanyl-L-cysteinyl-[cysteine desulfurase] + AH2 + ATP = 2-thiocytidine(32) in tRNA + L-cysteinyl-[cysteine desulfurase] + A + AMP + diphosphate + H(+). It participates in tRNA modification. Catalyzes the ATP-dependent 2-thiolation of cytidine in position 32 of tRNA, to form 2-thiocytidine (s(2)C32). The sulfur atoms are provided by the cysteine/cysteine desulfurase (IscS) system. The protein is tRNA-cytidine(32) 2-sulfurtransferase of Acinetobacter baylyi (strain ATCC 33305 / BD413 / ADP1).